The sequence spans 200 residues: Imidazole glycerol phosphate synthase subunit HisH (200 aa).

Residues 3-200 (DLALIDAGGA…LRNFLEMSFP (198 aa)) form the Glutamine amidotransferase type-1 domain. Cys78 serves as the catalytic Nucleophile. Active-site residues include His179 and Glu181.

As to quaternary structure, heterodimer of HisH and HisF.

It localises to the cytoplasm. It carries out the reaction 5-[(5-phospho-1-deoxy-D-ribulos-1-ylimino)methylamino]-1-(5-phospho-beta-D-ribosyl)imidazole-4-carboxamide + L-glutamine = D-erythro-1-(imidazol-4-yl)glycerol 3-phosphate + 5-amino-1-(5-phospho-beta-D-ribosyl)imidazole-4-carboxamide + L-glutamate + H(+). It catalyses the reaction L-glutamine + H2O = L-glutamate + NH4(+). Its pathway is amino-acid biosynthesis; L-histidine biosynthesis; L-histidine from 5-phospho-alpha-D-ribose 1-diphosphate: step 5/9. Its function is as follows. IGPS catalyzes the conversion of PRFAR and glutamine to IGP, AICAR and glutamate. The HisH subunit catalyzes the hydrolysis of glutamine to glutamate and ammonia as part of the synthesis of IGP and AICAR. The resulting ammonia molecule is channeled to the active site of HisF. In Xanthomonas campestris pv. campestris (strain 8004), this protein is Imidazole glycerol phosphate synthase subunit HisH.